A 299-amino-acid polypeptide reads, in one-letter code: Phosphatidylserine decarboxylase proenzyme (299 aa).

Residues aspartate 115, histidine 171, and serine 258 each act as charge relay system; for autoendoproteolytic cleavage activity in the active site. Residue serine 258 is the Schiff-base intermediate with substrate; via pyruvic acid; for decarboxylase activity of the active site. Pyruvic acid (Ser); by autocatalysis is present on serine 258.

This sequence belongs to the phosphatidylserine decarboxylase family. PSD-B subfamily. Prokaryotic type II sub-subfamily. In terms of assembly, heterodimer of a large membrane-associated beta subunit and a small pyruvoyl-containing alpha subunit. Requires pyruvate as cofactor. In terms of processing, is synthesized initially as an inactive proenzyme. Formation of the active enzyme involves a self-maturation process in which the active site pyruvoyl group is generated from an internal serine residue via an autocatalytic post-translational modification. Two non-identical subunits are generated from the proenzyme in this reaction, and the pyruvate is formed at the N-terminus of the alpha chain, which is derived from the carboxyl end of the proenzyme. The autoendoproteolytic cleavage occurs by a canonical serine protease mechanism, in which the side chain hydroxyl group of the serine supplies its oxygen atom to form the C-terminus of the beta chain, while the remainder of the serine residue undergoes an oxidative deamination to produce ammonia and the pyruvoyl prosthetic group on the alpha chain. During this reaction, the Ser that is part of the protease active site of the proenzyme becomes the pyruvoyl prosthetic group, which constitutes an essential element of the active site of the mature decarboxylase.

Its subcellular location is the cell membrane. It carries out the reaction a 1,2-diacyl-sn-glycero-3-phospho-L-serine + H(+) = a 1,2-diacyl-sn-glycero-3-phosphoethanolamine + CO2. Its pathway is phospholipid metabolism; phosphatidylethanolamine biosynthesis; phosphatidylethanolamine from CDP-diacylglycerol: step 2/2. Functionally, catalyzes the formation of phosphatidylethanolamine (PtdEtn) from phosphatidylserine (PtdSer). This Chlamydia felis (strain Fe/C-56) (Chlamydophila felis) protein is Phosphatidylserine decarboxylase proenzyme.